We begin with the raw amino-acid sequence, 285 residues long: Bifunctional protein FolD (285 aa).

NADP(+) contacts are provided by residues 165 to 167, serine 190, and isoleucine 231; that span reads GRS.

This sequence belongs to the tetrahydrofolate dehydrogenase/cyclohydrolase family. In terms of assembly, homodimer.

It catalyses the reaction (6R)-5,10-methylene-5,6,7,8-tetrahydrofolate + NADP(+) = (6R)-5,10-methenyltetrahydrofolate + NADPH. It carries out the reaction (6R)-5,10-methenyltetrahydrofolate + H2O = (6R)-10-formyltetrahydrofolate + H(+). The protein operates within one-carbon metabolism; tetrahydrofolate interconversion. In terms of biological role, catalyzes the oxidation of 5,10-methylenetetrahydrofolate to 5,10-methenyltetrahydrofolate and then the hydrolysis of 5,10-methenyltetrahydrofolate to 10-formyltetrahydrofolate. The chain is Bifunctional protein FolD from Alkaliphilus oremlandii (strain OhILAs) (Clostridium oremlandii (strain OhILAs)).